Reading from the N-terminus, the 216-residue chain is Protein Syd (216 aa).

The protein belongs to the Syd family.

Its subcellular location is the cell inner membrane. In terms of biological role, interacts with the SecY protein in vivo. May bind preferentially to an uncomplexed state of SecY, thus functioning either as a chelating agent for excess SecY in the cell or as a regulatory factor that negatively controls the translocase function. This chain is Protein Syd, found in Shewanella baltica (strain OS223).